Consider the following 282-residue polypeptide: MQSIQIPTGIHCANNLPFVLFGGINVLESEDLALRSCAEYVRVTDKLGIPYVFKASFDKANRSSIHSYRGPGLDEGMRIFEKVKQEFGVPIITDVHEPWQAAIVAQTADILQLPAFLARQTDLVIALAKTGKVINIKKPQFLSPSQMAHIAEKFREAGNDQLILCDRGSCFGYDNLVVDMLGFDVMTKSTGGLPVIFDVTHALQQRDPGGAASGGRRQQSAQLARSAMALGLAGLFLEAHPDPAKALCDGPSALPLAQLEPYLAQIKAIDDLVKSFDPLHID.

Belongs to the KdsA family.

It localises to the cytoplasm. The enzyme catalyses D-arabinose 5-phosphate + phosphoenolpyruvate + H2O = 3-deoxy-alpha-D-manno-2-octulosonate-8-phosphate + phosphate. The protein operates within carbohydrate biosynthesis; 3-deoxy-D-manno-octulosonate biosynthesis; 3-deoxy-D-manno-octulosonate from D-ribulose 5-phosphate: step 2/3. It functions in the pathway bacterial outer membrane biogenesis; lipopolysaccharide biosynthesis. This chain is 2-dehydro-3-deoxyphosphooctonate aldolase, found in Bordetella avium (strain 197N).